The primary structure comprises 346 residues: Quinolinate synthase (346 aa).

Iminosuccinate-binding residues include His47 and Ser68. Residue Cys113 coordinates [4Fe-4S] cluster. Iminosuccinate is bound by residues 139 to 141 and Ser156; that span reads YAN. Residue Cys200 coordinates [4Fe-4S] cluster. Iminosuccinate-binding positions include 226–228 and Thr243; that span reads HPE. Cys297 contributes to the [4Fe-4S] cluster binding site.

The protein belongs to the quinolinate synthase family. Type 1 subfamily. [4Fe-4S] cluster serves as cofactor.

Its subcellular location is the cytoplasm. It catalyses the reaction iminosuccinate + dihydroxyacetone phosphate = quinolinate + phosphate + 2 H2O + H(+). The protein operates within cofactor biosynthesis; NAD(+) biosynthesis; quinolinate from iminoaspartate: step 1/1. Its function is as follows. Catalyzes the condensation of iminoaspartate with dihydroxyacetone phosphate to form quinolinate. This Pseudoalteromonas translucida (strain TAC 125) protein is Quinolinate synthase.